A 327-amino-acid polypeptide reads, in one-letter code: Eukaryotic translation initiation factor 3 subunit I (327 aa).

5 WD repeats span residues 8 to 49 (GHER…GSYD), 51 to 89 (HNGAVWDIDVSWDTSKCVTASGDLTVKIWDAELGSCIYT), 188 to 227 (VHRYSIQDLQLSPRGDFLISASRDKTAALLDVNDLKKLKQ), 229 to 268 (KSERPVNSACIAPNRDHICLGGGEDAMQVTQTAVSAGHFE), and 285 to 324 (GHFGPINTMAWHPSGSIIATGGEDGYVRIQEFDEDYLGFT).

This sequence belongs to the eIF-3 subunit I family. As to quaternary structure, component of the eukaryotic translation initiation factor 3 (eIF-3) complex.

The protein resides in the cytoplasm. Its function is as follows. Component of the eukaryotic translation initiation factor 3 (eIF-3) complex, which is involved in protein synthesis of a specialized repertoire of mRNAs and, together with other initiation factors, stimulates binding of mRNA and methionyl-tRNAi to the 40S ribosome. The eIF-3 complex specifically targets and initiates translation of a subset of mRNAs involved in cell proliferation. The sequence is that of Eukaryotic translation initiation factor 3 subunit I from Caenorhabditis briggsae.